The following is a 463-amino-acid chain: Glycine--tRNA ligase (463 aa).

2 residues coordinate substrate: R98 and E174. Residues 206 to 208, 216 to 221, 290 to 291, and 334 to 337 each bind ATP; these read RNE, FRTREF, EL, and GADR. A substrate-binding site is contributed by 221 to 225; the sequence is FEQME. 330–334 provides a ligand contact to substrate; that stretch reads EPSLG.

This sequence belongs to the class-II aminoacyl-tRNA synthetase family. In terms of assembly, homodimer.

It is found in the cytoplasm. It catalyses the reaction tRNA(Gly) + glycine + ATP = glycyl-tRNA(Gly) + AMP + diphosphate. Its function is as follows. Catalyzes the attachment of glycine to tRNA(Gly). This Staphylococcus aureus (strain bovine RF122 / ET3-1) protein is Glycine--tRNA ligase.